The primary structure comprises 305 residues: 4-hydroxy-tetrahydrodipicolinate synthase 1 (305 aa).

T53 contributes to the pyruvate binding site. Y141 acts as the Proton donor/acceptor in catalysis. Residue K169 is the Schiff-base intermediate with substrate of the active site. A pyruvate-binding site is contributed by V209.

Belongs to the DapA family. Homotetramer; dimer of dimers.

Its subcellular location is the cytoplasm. It carries out the reaction L-aspartate 4-semialdehyde + pyruvate = (2S,4S)-4-hydroxy-2,3,4,5-tetrahydrodipicolinate + H2O + H(+). It participates in amino-acid biosynthesis; L-lysine biosynthesis via DAP pathway; (S)-tetrahydrodipicolinate from L-aspartate: step 3/4. Functionally, catalyzes the condensation of (S)-aspartate-beta-semialdehyde [(S)-ASA] and pyruvate to 4-hydroxy-tetrahydrodipicolinate (HTPA). This chain is 4-hydroxy-tetrahydrodipicolinate synthase 1, found in Streptomyces coelicolor (strain ATCC BAA-471 / A3(2) / M145).